The following is a 425-amino-acid chain: Adenylosuccinate synthetase (425 aa).

GTP is bound by residues Gly-12–Lys-18 and Gly-40–Thr-42. Asp-13 (proton acceptor) is an active-site residue. Mg(2+) is bound by residues Asp-13 and Gly-40. IMP is bound by residues Asp-13 to Lys-16, Asn-38 to His-41, Thr-129, Arg-143, Asn-221, Thr-236, and Arg-300. The active-site Proton donor is His-41. Val-296–Arg-302 provides a ligand contact to substrate. Residues Arg-302, Lys-328–Asp-330, and Gly-410–Gly-412 contribute to the GTP site.

The protein belongs to the adenylosuccinate synthetase family. In terms of assembly, homodimer. Requires Mg(2+) as cofactor.

Its subcellular location is the cytoplasm. It catalyses the reaction IMP + L-aspartate + GTP = N(6)-(1,2-dicarboxyethyl)-AMP + GDP + phosphate + 2 H(+). The protein operates within purine metabolism; AMP biosynthesis via de novo pathway; AMP from IMP: step 1/2. Functionally, plays an important role in the de novo pathway and in the salvage pathway of purine nucleotide biosynthesis. Catalyzes the first committed step in the biosynthesis of AMP from IMP. This Phaeosphaeria nodorum (strain SN15 / ATCC MYA-4574 / FGSC 10173) (Glume blotch fungus) protein is Adenylosuccinate synthetase.